The primary structure comprises 2222 residues: DNA polymerase epsilon catalytic subunit A (2222 aa).

The interval 90–110 is disordered; the sequence is ETLSSGSNGGGNSNDGERVTT. Residues Cys-2108, Cys-2111, Cys-2130, and Cys-2133 each coordinate Zn(2+). The segment at 2108–2133 adopts a CysA-type zinc-finger fold; that stretch reads CEYCFFISDIDFCKAAPESIFSCVRC. Positions 2164, 2167, 2179, and 2181 each coordinate [4Fe-4S] cluster. Positions 2164–2181 match the CysB motif motif; sequence CSRCHKVKRDYMSAHCPC.

Belongs to the DNA polymerase type-B family. In terms of assembly, DNA polymerase epsilon is a heterotetramer consisting of POL2, DPB2, DPB3 and DPB4. Requires [4Fe-4S] cluster as cofactor.

It is found in the nucleus. The enzyme catalyses DNA(n) + a 2'-deoxyribonucleoside 5'-triphosphate = DNA(n+1) + diphosphate. Functionally, catalytic component of the DNA polymerase epsilon complex which participates in chromosomal DNA replication. Required during synthesis of the leading DNA strands at the replication fork, binds at/or near replication origins and moves along DNA with the replication fork. Has 3'-5' proofreading exonuclease activity that corrects errors arising during DNA replication. The polypeptide is DNA polymerase epsilon catalytic subunit A (POL2) (Saccharomyces cerevisiae (strain ATCC 204508 / S288c) (Baker's yeast)).